Here is a 960-residue protein sequence, read N- to C-terminus: Anoctamin-1 (960 aa).

Residues 1-333 are Cytoplasmic-facing; it reads MRVPEKYSTL…FGEKVGLYFA (333 aa). A disordered region spans residues 92-115; it reads TRSVRQDQPLPGKGSPVDAGSPEV. A Phosphoserine modification is found at S196. Residues 334 to 354 traverse the membrane as a helical segment; sequence WLGAYTQMLIPASIVGVIVFL. Topologically, residues 355–406 are extracellular; that stretch reads YGCATVDENIPSMEMCDQRYNITMCPLCDKTCSYWKMSSACATARASHLFDN. Intrachain disulfides connect C370/C395, C379/C836, C382/C386, and C625/C630. A helical transmembrane segment spans residues 407 to 427; it reads PATVFFSVFMALWAATFMEHW. E425 is a Ca(2+) binding site. Residues 428-493 lie on the Cytoplasmic side of the membrane; the sequence is KRKQMRLNYR…RDRFPAYFTN (66 aa). A helical membrane pass occupies residues 494-514; the sequence is LVSIIFMIAVTFAIVLGVIIY. Residues 515–542 lie on the Extracellular side of the membrane; that stretch reads RISTAAALAMNSSPSVRSNIRVTVTATA. A helical membrane pass occupies residues 543 to 563; sequence VIINLVVIILLDEVYGCIARW. At 564–581 the chain is on the cytoplasmic side; it reads LTKIEVPKTEKSFEERLT. The chain crosses the membrane as a helical span at residues 582-602; sequence FKAFLLKFVNSYTPIFYVAFF. The Extracellular segment spans residues 603 to 631; it reads KGRFVGRPGDYVYIFRSFRMEECAPGGCL. The chain crosses the membrane as a helical span at residues 632-652; sequence MELCIQLSIIMLGKQLIQNNL. Ca(2+) contacts are provided by N651, E654, E702, E705, E734, and D738. Residues 653–699 are Cytoplasmic-facing; it reads FEIGIPKMKKFIRYLKLRRQSPSDREEYVKRKQRYEVDFNLEPFAGL. Transmembrane regions (helical) follow at residues 700-720 and 721-741; these read TPEY…VASF and PLAP…DAKK. The Cytoplasmic portion of the chain corresponds to 742-758; that stretch reads FVTELRRPVAIRAKDIG. Residues 759-779 form a helical membrane-spanning segment; the sequence is IWYNILRGVGKLAVIINAFVI. At 780 to 866 the chain is on the extracellular side; it reads SFTSDFIPRL…FWAVLAARLA (87 aa). The N-linked (GlcNAc...) asparagine glycan is linked to N806. A helical transmembrane segment spans residues 867–887; that stretch reads FVIVFQNLVMFMSDFVDWVIP. Ca(2+)-binding residues include D883 and D888. Topologically, residues 888 to 960 are cytoplasmic; the sequence is DIPKDISQQI…PSYEYHGDAL (73 aa). A disordered region spans residues 928-960; that stretch reads PRDVPCNNHSPTTHPEAGDGSPVPSYEYHGDAL.

It belongs to the anoctamin family. In terms of assembly, homodimer. Interacts with CFTR. Interacts with TRPV4. In terms of tissue distribution, expressed at the apical surface of the vomeronasal epithelium (at protein level). Expressed in the lateral and septal nasal glands (at protein level). Highly expressed in pulmonary bronchiole epithelial cells, pancreatic and submandibular gland acinar cells, kidney proximal tubule, all retinal cell layers, most sensory cells of dorsal root ganglia, Leydig cells and spermatocytes (at protein level). In the dorsal root ganglia, detected in small-diameter nociceptive neurons and in larger myelinated neurons (at protein level). In the dorsal root ganglia, expressed in MrgprA3-positive neurons (at protein level). In the developing brain, highly expressed in the ventricular zone and subventricular zone at 12.5 dpc and 14.5 dpc where it is detected in radial glial cells but not in neurons with expression dramatically decreased at P1 (at protein level). Highly expressed in the endometrial stroma (at protein level). In taste buds of the vallate papillae, expressed in the apical region of type I taste cells (at protein level). In the kidney, expressed in the collecting duct (at protein level). In the retina, strongly expressed in the outer and inner plexiform layers, weakly expressed in some somata in the inner nuclear layer and ganglion cell layer and not expressed in the outer nuclear layer (at protein level). Expressed in various retinal neurons including rod bipolar cells (at protein level). Expressed in eye, brain, myometrium and endometrium with higher levels in endometrium than myometrium in estrus and day 18 pregnant mice. Not detected in uterine smooth muscle cells. Expressed at high levels in the thyroid gland and gastrointestinal muscles.

Its subcellular location is the apical cell membrane. It localises to the presynapse. The catalysed reaction is chloride(in) = chloride(out). ATP and calmodulin are essential for its activation. Channel activity is inhibited by CFTR protein and by chloride inhibitors such as niflumic acid (NFA) and 4,4'-diisothiocyanatostilbene-2,2'-disulfonic acid (DIDS). Activated by heat with activation seen at temperatures above 44 degrees Celsius. Activated by BDNF in radial glial cells. Functionally, calcium-activated chloride channel (CaCC). Plays a role in transepithelial anion transport and smooth muscle contraction. Required for the normal functioning of the interstitial cells of Cajal (ICCs) which generate electrical pacemaker activity in gastrointestinal smooth muscles. Acts as a major contributor to basal and stimulated chloride conductance in airway epithelial cells and plays an important role in tracheal cartilage development. Required for CFTR activation by enhancing endoplasmic reticulum Ca(2+) store release and is also required for CFTR membrane expression. Required for basal and ATP-dependent mucus secretion in airways and intestine, probably by controlling exocytosis of mucus-filled granules by providing Ca(2+) to an apical signaling compartment. Contributes to airway mucus expression induced by interleukins IL3 and IL8 and by the asthma-associated protein CLCA1 and is required for expression of mucin MUC5AC. However, was shown in another study not to be required for MUC5AC expression. Plays a role in the propagation of Ca(2+) waves in Kolliker's organ in the cochlea and contributes to the refinement of auditory brainstem circuitries prior to hearing onset. In vomeronasal sensory neurons, modulates spontaneous firing patterns in the absence of stimuli as well as the firing pattern of pheromone-evoked activity. Responsible for calcium-activated chloride channel activity in type I taste cells of the vallate papillae. Acts as a heat sensor in nociceptive neurons. In dorsal root ganglion neurons, plays a role in mediating non-histaminergic Mas-related G-protein coupled receptor (MRGPR)-dependent itching, acting as a downstream effector of MRGPRs. In the developing brain, required for the Ca(2+)-dependent process extension of radial glial cells. The chain is Anoctamin-1 (Ano1) from Mus musculus (Mouse).